We begin with the raw amino-acid sequence, 169 residues long: Small ribosomal subunit protein uS5 (169 aa).

One can recognise an S5 DRBM domain in the interval 14 to 77 (LQEKLVAVRR…EQARKNMRKV (64 aa)).

This sequence belongs to the universal ribosomal protein uS5 family. In terms of assembly, part of the 30S ribosomal subunit. Contacts proteins S4 and S8.

Functionally, with S4 and S12 plays an important role in translational accuracy. In terms of biological role, located at the back of the 30S subunit body where it stabilizes the conformation of the head with respect to the body. The protein is Small ribosomal subunit protein uS5 of Methylococcus capsulatus (strain ATCC 33009 / NCIMB 11132 / Bath).